Reading from the N-terminus, the 418-residue chain is Pestheic acid cluster transcriptional regulator 1 (418 aa).

Residues 244–272 (GTAVTTTATTSSSFISKSSEEPSPKRIKP) form a disordered region. Residues 245-260 (TAVTTTATTSSSFISK) show a composition bias toward low complexity.

It is found in the nucleus. Its function is as follows. Transcription factor that, with ptaR2 and ptaR3, coregulates the expression of the gene cluster that mediates the biosynthesis of pestheic acid, a diphenyl ether which is a biosynthetic precursor of the unique chloropupukeananes. This chain is Pestheic acid cluster transcriptional regulator 1, found in Pestalotiopsis fici (strain W106-1 / CGMCC3.15140).